We begin with the raw amino-acid sequence, 509 residues long: MRPIPRTMSTQHPDNATVPEWAKGDVIEGEAEVIEAYYAFSRLNVHEVMWDAEGKDVDTHVVRKLFSSFDEYFKNNILGEDIFLTYRLPNPKIEGAERKVFAETMESIPITFDVAERFYGRKVVPVFEVILPFTTNASDIISVARYYERAVAMEENIELQDGVYVRDLVGEIYPKRIEVIPLIEDKDSLLNTRNIIEGYYRAIKPSYMRLFIARSDPAMNYGMLTAVLLAKYALSEAGKLAEELGIPIFPIIGVGSLPFRGHLSPENYQRVMEEYEGVYTFTIQSAFKYDYSEEQVKGAISHINREEVKEPRILGEEEKKVTRDIIETYTLSYQPVIESLANLINTVALHLPRRRARKLHISLFGYARSTGKVMLPRAITFVGSLYSVGLPPEVIGISSLGKLNEMQWNILEENYKFLKNDLQKASEFINPEGLSTLVSYGYLDAEISKKLEEDIKYLESMGVKIGPRSYETKKHALLSQLLMLSLKEKKYNEVKQYAREMAVIRKSIG.

The protein belongs to the PEPCase type 2 family. As to quaternary structure, homotetramer. Mg(2+) serves as cofactor.

The enzyme catalyses oxaloacetate + phosphate = phosphoenolpyruvate + hydrogencarbonate. In terms of biological role, catalyzes the irreversible beta-carboxylation of phosphoenolpyruvate (PEP) to form oxaloacetate (OAA), a four-carbon dicarboxylic acid source for the tricarboxylic acid cycle. The chain is Phosphoenolpyruvate carboxylase from Metallosphaera sedula (strain ATCC 51363 / DSM 5348 / JCM 9185 / NBRC 15509 / TH2).